The chain runs to 98 residues: NADH-ubiquinone oxidoreductase chain 4L (98 aa).

Helical transmembrane passes span 2 to 22 (PSTFFNLTMAFSLSLLGTLMF), 26 to 46 (LMSTLLCLEGMVLSLFIMTSV), and 58 to 79 (PIPITILVFAACEAAVGLALLV).

Belongs to the complex I subunit 4L family. As to quaternary structure, core subunit of respiratory chain NADH dehydrogenase (Complex I) which is composed of 45 different subunits.

The protein localises to the mitochondrion inner membrane. The enzyme catalyses a ubiquinone + NADH + 5 H(+)(in) = a ubiquinol + NAD(+) + 4 H(+)(out). Core subunit of the mitochondrial membrane respiratory chain NADH dehydrogenase (Complex I) which catalyzes electron transfer from NADH through the respiratory chain, using ubiquinone as an electron acceptor. Part of the enzyme membrane arm which is embedded in the lipid bilayer and involved in proton translocation. This is NADH-ubiquinone oxidoreductase chain 4L from Mus musculus (Mouse).